Here is a 759-residue protein sequence, read N- to C-terminus: MDGNRRVRFNTDRRPYLSPLQTSFPSSTSFQTPTFLIEEDDEDTEDDDGPQVLPVHRAPSPAAFRKRGSITSMDQYLVNMPAVPSPTASKVGLLDARNTDVESYAASYKTQSSSNSVNSLPMRRPTLDRSYSAPMIAAKNLQSDPEKMSNVESTNELPSTTTEAYKLVAAHTAARLEHMRLNALKAANDEGEDVKDNEQDDNIDESDPFANPKASYRGGVLSNLLKLYTNSNTVTSSRISLKHTDPTKWQKHAKRTASSNSLTDLLHASNQTFMAPASGLQSTEEIPQFSKTGHSRGRKFNFHHHSRKNSGLNEEYKITIHLADILQRQKYILKLCRALMVYGAPSHRLEEHMASAAKVLEIEGQFLYIPGCMIVSFGDVNTHTSDMHIVRVNQTIDLGRLKLVHDIYKAVLHDRMGVEEAIRGLDEIFKSPPYFRTWILVVFYGFASATILPMSFQGGWIDLPIAFILGCLVGILQHYIAPRSTMYNSLFEVTGSIITSFLSRAFGSIRYSGGRRFCFSALAEGAIVLILPGYIVLCGSLELQSKNIVAGGVRMFYAIIYSLFLSFGISIGAALYGWMDHNATDSTSCPVSTQMDDKWKILFVPLFTLCLLIVNQARPSQWPVSIFISCAGYVVNYFTAKHFGSNPIANAIGSFAIGCLGNIYSRLGRGVAFAAVLPAIFVQVPSGLAAQGGISSGIEVATSLTNNTYNTSSSSTLDVNSLKFGLVMVQIAIGISVGLFASALVVYPFGKRRSGLFSF.

Disordered stretches follow at residues 1 to 31 (MDGNRRVRFNTDRRPYLSPLQTSFPSSTSFQ) and 188 to 211 (NDEGEDVKDNEQDDNIDESDPFAN). Positions 17–31 (LSPLQTSFPSSTSFQ) are enriched in low complexity. The span at 189–207 (DEGEDVKDNEQDDNIDESD) shows a compositional bias: acidic residues. Helical transmembrane passes span 434–454 (YFRTWILVVFYGFASATILPM), 456–476 (FQGGWIDLPIAFILGCLVGIL), 486–505 (MYNSLFEVTGSIITSFLSRA), 517–537 (FCFSALAEGAIVLILPGYIVL), 555–575 (MFYAIIYSLFLSFGISIGAAL), 597–617 (DKWKILFVPLFTLCLLIVNQA), 620–640 (SQWPVSIFISCAGYVVNYFTA), 643–663 (FGSNPIANAIGSFAIGCLGNI), 670–690 (GVAFAAVLPAIFVQVPSGLAA), and 726–746 (LVMVQIAIGISVGLFASALVV).

This sequence belongs to the ThrE exporter (TC 2.A.79) family.

It is found in the endoplasmic reticulum membrane. This is an uncharacterized protein from Schizosaccharomyces pombe (strain 972 / ATCC 24843) (Fission yeast).